The primary structure comprises 689 residues: Elongation factor G (689 aa).

The tr-type G domain maps to 9–283 (AKFRNIGIMA…AIIEFMPSPL (275 aa)). GTP-binding positions include 18 to 25 (AHIDAGKT), 82 to 86 (DTPGH), and 136 to 139 (NKMD).

This sequence belongs to the TRAFAC class translation factor GTPase superfamily. Classic translation factor GTPase family. EF-G/EF-2 subfamily.

It localises to the cytoplasm. Its function is as follows. Catalyzes the GTP-dependent ribosomal translocation step during translation elongation. During this step, the ribosome changes from the pre-translocational (PRE) to the post-translocational (POST) state as the newly formed A-site-bound peptidyl-tRNA and P-site-bound deacylated tRNA move to the P and E sites, respectively. Catalyzes the coordinated movement of the two tRNA molecules, the mRNA and conformational changes in the ribosome. This Clostridium botulinum (strain 657 / Type Ba4) protein is Elongation factor G.